We begin with the raw amino-acid sequence, 149 residues long: 4-hydroxyphenylacetate 3-monooxygenase, reductase component (149 aa).

27 to 34 (ERGMTATA) serves as a coordination point for FAD. An NAD(+)-binding site is contributed by Ser-37. FAD-binding positions include 48 to 50 (AVS), 54 to 55 (KL), and His-80. NAD(+)-binding positions include His-116 and 137–140 (YFQR).

Belongs to the non-flavoprotein flavin reductase family. HpaC subfamily. Homodimer. 4-HPA 3-monooxygenase consists of a reductase component HpaC and an oxygenase component HpaB.

It catalyses the reaction a reduced flavin + NAD(+) = an oxidized flavin + NADH + 2 H(+). It participates in aromatic compound metabolism; 4-hydroxyphenylacetate degradation; pyruvate and succinate semialdehyde from 4-hydroxyphenylacetate: step 1/7. Its function is as follows. Catalyzes the reduction of free flavins (FMN, FAD and riboflavin) by NADH. Subsequently, the reduced flavins diffuse to the large HpaB component. It utilizes NADH, but not NADPH as an electron donor, and both FAD and FMN as electron acceptors. The protein is 4-hydroxyphenylacetate 3-monooxygenase, reductase component of Thermus thermophilus (strain ATCC 27634 / DSM 579 / HB8).